The following is a 590-amino-acid chain: Putative DEAD-box ATP-dependent RNA helicase 51 (590 aa).

The disordered stretch occupies residues 1 to 81 (MHPIKLCARS…KQGEGKKGSG (81 aa)). The segment covering 40-51 (AACNSEGENNAT) has biased composition (polar residues). Residues 59–78 (NKKMKEEKSKRKKKQGEGKK) are compositionally biased toward basic and acidic residues. The short motif at 86 to 114 (KLFSDLPISDLTANAIRDMNYTHLTEIQA) is the Q motif element. A Helicase ATP-binding domain is found at 117-293 (IPPLMLGSDV…KLTFGSKEER (177 aa)). Residue 130-137 (AKTGSGKT) coordinates ATP. A DEAD box motif is present at residues 240-243 (DEAD). Positions 329–481 (VLYAFLKKAL…ELVPKLQPYL (153 aa)) constitute a Helicase C-terminal domain. Residues 549-590 (LESSASKHRKKRNVNTGRRHGIGPSNPYGRKGSDDRRQFARF) are disordered. The segment covering 554–569 (SKHRKKRNVNTGRRHG) has biased composition (basic residues). Basic and acidic residues predominate over residues 579–590 (KGSDDRRQFARF).

Belongs to the DEAD box helicase family. DDX18/HAS1 subfamily.

The catalysed reaction is ATP + H2O = ADP + phosphate + H(+). The polypeptide is Putative DEAD-box ATP-dependent RNA helicase 51 (Oryza sativa subsp. japonica (Rice)).